A 443-amino-acid polypeptide reads, in one-letter code: MMTNIWHTAPVSALSGEITICGDKSMSHRALLLAALAEGQTEIRGFLACADCLATRQALRALGVDIQREKEIVTIRGVGFLGLQPPKAPLNMQNSGTSMRLLAGILAAQRFESVLCGDESLEKRPMQRIITPLVQMGAKIVSHSNFTAPLHISGRPLTGIDYALPLPSAQLKSCLILAGLLADGTTRLHTCGISRDHTERMLPLFGGALEIKKEQIIVTGGQKLHGCVLDIVGDLSAAAFFMVAALIAPRAEVVIRNVGINPTRAAIITLLQKMGGRIELHHQRFWGAEPVADIVVYHSKLRGITVAPEWIANAIDELPIFFIAAACAEGTTFVGNLSELRVKESDRLAAMAQNLQTLGVACDVGADFIHIYGRSDRQFLPARVNSFGDHRIAMSLAVAGVRAAGELLIDDGAVAAVSMPQFRDFAAAIGMNVGEKDAKNCHD.

Residues lysine 24, serine 25, and arginine 29 each coordinate 3-phosphoshikimate. Lysine 24 contacts phosphoenolpyruvate. Phosphoenolpyruvate-binding residues include glycine 96 and arginine 124. Residues serine 168, glutamine 170, aspartate 316, and lysine 343 each contribute to the 3-phosphoshikimate site. Glutamine 170 is a binding site for phosphoenolpyruvate. The active-site Proton acceptor is the aspartate 316. Positions 347 and 391 each coordinate phosphoenolpyruvate.

It belongs to the EPSP synthase family. Monomer.

It localises to the cytoplasm. The enzyme catalyses 3-phosphoshikimate + phosphoenolpyruvate = 5-O-(1-carboxyvinyl)-3-phosphoshikimate + phosphate. Its pathway is metabolic intermediate biosynthesis; chorismate biosynthesis; chorismate from D-erythrose 4-phosphate and phosphoenolpyruvate: step 6/7. Catalyzes the transfer of the enolpyruvyl moiety of phosphoenolpyruvate (PEP) to the 5-hydroxyl of shikimate-3-phosphate (S3P) to produce enolpyruvyl shikimate-3-phosphate and inorganic phosphate. The sequence is that of 3-phosphoshikimate 1-carboxyvinyltransferase from Dichelobacter nodosus (Bacteroides nodosus).